The chain runs to 178 residues: Cell division protein ZapC (178 aa).

Belongs to the ZapC family. In terms of assembly, interacts directly with FtsZ.

Its subcellular location is the cytoplasm. Its function is as follows. Contributes to the efficiency of the cell division process by stabilizing the polymeric form of the cell division protein FtsZ. Acts by promoting interactions between FtsZ protofilaments and suppressing the GTPase activity of FtsZ. The polypeptide is Cell division protein ZapC (Aeromonas hydrophila subsp. hydrophila (strain ATCC 7966 / DSM 30187 / BCRC 13018 / CCUG 14551 / JCM 1027 / KCTC 2358 / NCIMB 9240 / NCTC 8049)).